Here is a 205-residue protein sequence, read N- to C-terminus: Probable thymidylate kinase (205 aa).

7-14 (GIDGSGKS) is a binding site for ATP.

It belongs to the thymidylate kinase family.

The enzyme catalyses dTMP + ATP = dTDP + ADP. The protein is Probable thymidylate kinase of Methanoculleus marisnigri (strain ATCC 35101 / DSM 1498 / JR1).